The chain runs to 447 residues: BAG family molecular chaperone regulator 5 (447 aa).

BAG domains are found at residues 9 to 86 (SISR…EQNA), 95 to 167 (QNIF…EDCM), 182 to 260 (SVAK…DLEE), 275 to 350 (SIIK…DLKE), and 365 to 442 (PHKA…DMKS).

In terms of assembly, binds to the ATPase domain of HSP/HSP70 chaperones. Binds PRKN. Interacts with HSPA8. Interacts with JPH2.

Co-chaperone for HSP/HSP70 proteins. It functions as a nucleotide-exchange factor promoting the release of ADP from HSP70, thereby activating HSP70-mediated protein refolding. Has an essential role in maintaining proteostasis at junctional membrane complexes (JMC), where it may function as a scaffold between the HSPA8 chaperone and JMC proteins enabling correct, HSPA8-dependent JMC protein folding. Inhibits both auto-ubiquitination of PRKN and ubiquitination of target proteins by PRKN. In Mus musculus (Mouse), this protein is BAG family molecular chaperone regulator 5 (Bag5).